The sequence spans 188 residues: Elongation factor P (188 aa).

It belongs to the elongation factor P family.

The protein resides in the cytoplasm. The protein operates within protein biosynthesis; polypeptide chain elongation. In terms of biological role, involved in peptide bond synthesis. Stimulates efficient translation and peptide-bond synthesis on native or reconstituted 70S ribosomes in vitro. Probably functions indirectly by altering the affinity of the ribosome for aminoacyl-tRNA, thus increasing their reactivity as acceptors for peptidyl transferase. In Wolbachia sp. subsp. Drosophila simulans (strain wRi), this protein is Elongation factor P.